Consider the following 594-residue polypeptide: MTRGLELLIAQTILQGFDAQYGRFLEVTSGAQQRFEQADWHAVQQAMKQRIHLYDHHVGLVVEQLRCITEGKSTDVDFLLRVKQQYTQLLPDYPRFEIAESFFNSVYCRLFDHRSLTPERLFIFSSQPERPFRTLPRPLAKDFFPERGWSHLLGKVLSDLPLRLPWQNKARDIGYIIASLQEALGEELLATCHLQVANELFYRNKAAWLVGKLVMPMATLPFLLPIHRSEEGELFVDTCLTTHAEASIVFGFARSYFMVYAPLPGALVEWLREILPGKTTAELYMAIGCQKHAKTESYREYLHYITRCDEQFIEAPGIRGMVMLVFTLPGFDRVFKVIKDRFAPQKEMTAAHVRACYQLVKEHDRVGRMADTQEFENFVLDKRQIAPALLALLQAEAGNKLTDLGDRIVISHLYIERRMVPLNLWLEQVNGQALRDAVEEYGNAIRQLAAANIFPGDMLFKNFGVTRHGRVVFYDYDEICYMTEVNFREIPPPRYPEDELASEPWYSVSPGDVFPEEFRHWLCADPRIGPLFEEMHADLLRADYWRALQMRIKNGHVEDVYAYRRKQRFSVRYGADSRPDKAFTPPSGKVRRSA.

Residues 315–321 (APGIRGM) and Lys336 contribute to the ATP site. Asp371 is a catalytic residue.

This sequence belongs to the AceK family.

The protein resides in the cytoplasm. It carries out the reaction L-seryl-[isocitrate dehydrogenase] + ATP = O-phospho-L-seryl-[isocitrate dehydrogenase] + ADP + H(+). Bifunctional enzyme which can phosphorylate or dephosphorylate isocitrate dehydrogenase (IDH) on a specific serine residue. This is a regulatory mechanism which enables bacteria to bypass the Krebs cycle via the glyoxylate shunt in response to the source of carbon. When bacteria are grown on glucose, IDH is fully active and unphosphorylated, but when grown on acetate or ethanol, the activity of IDH declines drastically concomitant with its phosphorylation. The sequence is that of Isocitrate dehydrogenase kinase/phosphatase from Klebsiella pneumoniae subsp. pneumoniae (strain ATCC 700721 / MGH 78578).